We begin with the raw amino-acid sequence, 182 residues long: ATP synthase subunit delta (182 aa).

Belongs to the ATPase delta chain family. F-type ATPases have 2 components, F(1) - the catalytic core - and F(0) - the membrane proton channel. F(1) has five subunits: alpha(3), beta(3), gamma(1), delta(1), epsilon(1). CF(0) has four main subunits: a(1), b(1), b'(1) and c(10-14). The alpha and beta chains form an alternating ring which encloses part of the gamma chain. F(1) is attached to F(0) by a central stalk formed by the gamma and epsilon chains, while a peripheral stalk is formed by the delta, b and b' chains.

The protein localises to the cellular thylakoid membrane. In terms of biological role, f(1)F(0) ATP synthase produces ATP from ADP in the presence of a proton or sodium gradient. F-type ATPases consist of two structural domains, F(1) containing the extramembraneous catalytic core and F(0) containing the membrane proton channel, linked together by a central stalk and a peripheral stalk. During catalysis, ATP synthesis in the catalytic domain of F(1) is coupled via a rotary mechanism of the central stalk subunits to proton translocation. Functionally, this protein is part of the stalk that links CF(0) to CF(1). It either transmits conformational changes from CF(0) to CF(1) or is implicated in proton conduction. This is ATP synthase subunit delta from Synechococcus sp. (strain WH7803).